We begin with the raw amino-acid sequence, 226 residues long: Uridylate kinase (226 aa).

Position 9–10 (9–10 (GS)) interacts with ATP. Residue Gly46 participates in UMP binding. Gly47 and Arg51 together coordinate ATP. Residues Asp68 and 116–122 (THPGHTT) contribute to the UMP site. Residues Thr142, Asn143, Tyr148, and Asp151 each coordinate ATP.

Belongs to the UMP kinase family. As to quaternary structure, homohexamer.

It localises to the cytoplasm. The enzyme catalyses UMP + ATP = UDP + ADP. It participates in pyrimidine metabolism; CTP biosynthesis via de novo pathway; UDP from UMP (UMPK route): step 1/1. Inhibited by UTP. Its function is as follows. Catalyzes the reversible phosphorylation of UMP to UDP. This Methanocaldococcus jannaschii (strain ATCC 43067 / DSM 2661 / JAL-1 / JCM 10045 / NBRC 100440) (Methanococcus jannaschii) protein is Uridylate kinase.